Consider the following 206-residue polypeptide: MAQTRGNLFILSAPSGAGKSSLINALLKKHTDMKVSVSHTTRAKRPGEENGVHYHFVSTDEFKALITKDDFFEWAQVFDNYYGTSKQAIESQLDAGIDVFLDIDWQGAQQVRKIMPSVQTIFILPPSKAELEQRLNNRGQDSQEIIAGRMAQAQSETSHYNEYDFVIVNDDFDTALTDIETIVMAQRLTLKMQSVRHQSLLNSLLK.

One can recognise a Guanylate kinase-like domain in the interval 6 to 184; sequence GNLFILSAPS…ALTDIETIVM (179 aa). 13 to 20 is an ATP binding site; the sequence is APSGAGKS.

Belongs to the guanylate kinase family.

The protein localises to the cytoplasm. The enzyme catalyses GMP + ATP = GDP + ADP. Its function is as follows. Essential for recycling GMP and indirectly, cGMP. This chain is Guanylate kinase, found in Pseudoalteromonas translucida (strain TAC 125).